Consider the following 305-residue polypeptide: Small ribosomal subunit biogenesis GTPase RsgA (305 aa).

The region spanning 67–224 is the CP-type G domain; the sequence is SSELVRPAVA…VADTPGFSSF (158 aa). GTP is bound by residues 116 to 119 and 166 to 174; these read NKID and GQSGVGKST. The Zn(2+) site is built by Cys-248, Cys-253, His-255, and Cys-261.

The protein belongs to the TRAFAC class YlqF/YawG GTPase family. RsgA subfamily. In terms of assembly, monomer. Associates with 30S ribosomal subunit, binds 16S rRNA. Zn(2+) serves as cofactor.

The protein resides in the cytoplasm. In terms of biological role, one of several proteins that assist in the late maturation steps of the functional core of the 30S ribosomal subunit. Helps release RbfA from mature subunits. May play a role in the assembly of ribosomal proteins into the subunit. Circularly permuted GTPase that catalyzes slow GTP hydrolysis, GTPase activity is stimulated by the 30S ribosomal subunit. The polypeptide is Small ribosomal subunit biogenesis GTPase RsgA (Ruminiclostridium cellulolyticum (strain ATCC 35319 / DSM 5812 / JCM 6584 / H10) (Clostridium cellulolyticum)).